The chain runs to 1009 residues: MICAL-like protein 2 (1009 aa).

A Calponin-homology (CH) domain is found at 1–107; the sequence is MAAIKALQEW…YVSQYYNYFH (107 aa). Positions 1 to 260 are forms an intramolecular interaction with the C-terminal coiled coil domain keeping the protein in a closed conformation; it reads MAAIKALQEW…KSSNLASRKP (260 aa). A phosphoserine mark is found at S110, S143, and S153. Disordered stretches follow at residues 114 to 180, 247 to 268, 348 to 447, and 655 to 834; these read GMAG…PGTA, SVSP…ADTR, NSSP…TSKV, and SPSI…TSPV. Polar residues predominate over residues 144–171; it reads PAQTQRSPLSPARTNPVVQRNEGGSQRP. Residues 186-248 enclose the LIM zinc-binding domain; that stretch reads SICGVCGKHV…THHSSEVTSV (63 aa). S249 carries the post-translational modification Phosphoserine. A necessary and sufficient for interaction with actinins region spans residues 261–393; it reads GGVTADTRPF…QGQTASKGVK (133 aa). The interval 261-805 is mediates targeting to the cell plasma membrane; the sequence is GGVTADTRPF…EDGTRSCKEE (545 aa). Residues 348 to 419 show a composition bias toward polar residues; sequence NSSPIGWSSP…AWTSSASKTQ (72 aa). Pro residues predominate over residues 430-442; that stretch reads PSAPAPASAPAPA. The span at 694 to 730 shows a compositional bias: basic and acidic residues; that stretch reads EGWRARLKPVDKKTPAGRSLEQKEPVLAEPRIGDTSR. 2 stretches are compositionally biased toward low complexity: residues 731–746 and 755–769; these read KASS…TLTS and PAGS…SPSP. Phosphoserine occurs at positions 766 and 768. Basic and acidic residues predominate over residues 791–817; it reads EPKKQEDGTRSCKEEKSPTRWSRERSA. The interval 806 to 913 is forms an intramolecular interaction with the N-terminal Calponin-homology and LIM zinc-binding domains-containing region keeping the protein in a closed conformation; that stretch reads KSPTRWSRER…LMYKSKDQRL (108 aa). Phosphoserine is present on S832. Residues 833-980 enclose the bMERB domain; that stretch reads PVRLHPDYIP…EQEEDQMLEN (148 aa). Positions 841-880 form a coiled coil; sequence IPQEELQRQLQDIESQLDALELRGVELEKRLRAAEGDASE. Residues 913-1009 are mediates interaction with RAB13 and is required for transition from the closed to the open conformation; that stretch reads LEEQQLDLQG…WSSKSKSGQA (97 aa).

Interacts with RAB13 (GTP-bound form); competes with RAB8A and is involved in tight junctions assembly. Interacts with RAB8A; competes with RAB13 and is involved in E-cadherin endocytic recycling. Interacts with RAB8B. Interacts (preferentially in opened conformation) with ACTN1 and ACTN4; stimulated by RAB13 activation. Interacts (via calponin-homology (CH) domain) with the filamins FLNA, FLNB and FLNC (via actin-binding domain). In terms of tissue distribution, detected in brain, lung, liver and kidney (at protein level).

The protein resides in the cell membrane. Its subcellular location is the cell junction. It localises to the tight junction. It is found in the recycling endosome. The protein localises to the cell projection. The protein resides in the neuron projection. Its subcellular location is the cytoplasm. It localises to the cytoskeleton. Functionally, effector of small Rab GTPases RAB8A and RAB13 which is involved in junctional complexes assembly through the regulation of cell adhesion molecules transport to the plasma membrane and actin cytoskeleton reorganization. Regulates the endocytic recycling of occludins, claudins and E-cadherin to the plasma membrane and may thereby regulate the establishment of tight junctions and adherens junctions. In parallel, may regulate actin cytoskeleton reorganization directly through interaction with F-actin or indirectly through actinins and filamins. Undergoes liquid-liquid phase separation to form tubular recycling endosomes. Plays 2 sequential roles in the biogenesis of tubular recycling endosomes: first organizes phase separation and then the closed form formed by interaction with RAB8A promotes endosomal tubulation. The sequence is that of MICAL-like protein 2 (Micall2) from Mus musculus (Mouse).